Here is a 100-residue protein sequence, read N- to C-terminus: Small ribosomal subunit protein uS14 (100 aa).

It belongs to the universal ribosomal protein uS14 family. In terms of assembly, part of the 30S ribosomal subunit. Contacts proteins S3 and S10.

Its function is as follows. Binds 16S rRNA, required for the assembly of 30S particles and may also be responsible for determining the conformation of the 16S rRNA at the A site. The polypeptide is Small ribosomal subunit protein uS14 (Rippkaea orientalis (strain PCC 8801 / RF-1) (Cyanothece sp. (strain PCC 8801))).